The chain runs to 305 residues: Testis-expressed protein 52 (305 aa).

A disordered region spans residues 284–305 (HLSKAQASKSPARKRKRRPGHF). Basic residues predominate over residues 294 to 305 (PARKRKRRPGHF).

As to expression, expressed in Testis.

The sequence is that of Testis-expressed protein 52 from Homo sapiens (Human).